Reading from the N-terminus, the 1009-residue chain is Epstein-Barr nuclear antigen 6 (1009 aa).

Disordered regions lie at residues methionine 1–methionine 70, threonine 356–valine 504, valine 516–serine 646, glutamine 663–alanine 922, proline 948–cysteine 971, and aspartate 984–aspartate 1009. Basic and acidic residues predominate over residues glutamine 12 to aspartate 31. Residues valine 381–proline 391 are compositionally biased toward acidic residues. The span at alanine 445 to threonine 461 shows a compositional bias: polar residues. 2 stretches are compositionally biased toward pro residues: residues glutamine 479–proline 495 and alanine 563–alanine 574. 2 stretches are compositionally biased toward polar residues: residues glutamate 622 to threonine 641 and proline 664 to isoleucine 679. Residues serine 680–aspartate 689 are compositionally biased toward basic and acidic residues. Composition is skewed to low complexity over residues alanine 710–glutamate 769 and proline 776–alanine 798. The span at aspartate 862–threonine 874 shows a compositional bias: polar residues. Positions proline 876–glutamine 898 are enriched in low complexity. A compositionally biased stretch (pro residues) spans proline 899–proline 916.

The protein belongs to the herpesviridae EBNA-6 family. Interacts with host CTPB1; this interaction leads to gene repression, but also seems to interfere with the repressive function of CtBP pre-bound to DNA, leading to EBNA6 mediated up-regulation of many host genes. Interacts with host MYC; this interaction enhances MYC stability. Interacts (via N-terminus) with host RBPJ. Interacts (via N-terminus) with host histone H2AX; this interaction facilitates H2AX proteasomal degradation. Interacts with host TP73; this interaction inhibits TP73-mediated apoptotic pathway. Interacts (via N-terminus) with host PIM1; this interaction upregulates and stabilizes PIM1 and induces cell proliferation by inhibiting the growth suppressive properties of p21.

The protein resides in the host nucleus. Its subcellular location is the host nucleus matrix. In terms of biological role, plays an essential role for the activation and immortalization of human B-cells. Represses transcription of viral promoters TP1 and Cp through interaction with host RBPJ, and inhibits EBNA2-mediated activation of these promoters. Targets host chromatin through interactions with host transcription factors, especially RBPJ and IRF4. Alternatively, EBNA6 also regulates the transcription of the EBV oncogene LMP1 in a cell cycle-dependent manner. Modulates the activity of several host proteins involved in cell cycle regulation including host cyclin A, MYC, RB, p21 and p27 mainly through binding to the host SCF(SKP2) complex. Inhibits the promoter of host H2AX and targets H2AX to proteasomal degradation in order to promote latency and cell proliferation. Upregulates host PIM1 expression and stabilization. Potentiates PIM1 to promote cell proliferation by inhibiting the growth suppressive properties of p21. In Epstein-Barr virus (strain GD1) (HHV-4), this protein is Epstein-Barr nuclear antigen 6 (EBNA6).